A 143-amino-acid chain; its full sequence is Transcriptional regulator MraZ (143 aa).

2 consecutive SpoVT-AbrB domains span residues T5 to E47 and A76 to T119.

This sequence belongs to the MraZ family. Forms oligomers.

The protein resides in the cytoplasm. Its subcellular location is the nucleoid. This chain is Transcriptional regulator MraZ, found in Clavibacter michiganensis subsp. michiganensis (strain NCPPB 382).